Reading from the N-terminus, the 410-residue chain is Polyadenylation and cleavage factor homolog 5 (410 aa).

Residues 1–17 (MASNGSFSAQRNANAGT) are compositionally biased toward polar residues. The disordered stretch occupies residues 1 to 32 (MASNGSFSAQRNANAGTTMKRRNDNRGYGGGI). The stretch at 191–214 (SKELTDLLSLLNNEKEKKTSEASN) forms a coiled coil. Residues 247 to 269 (RQCTSCGVRFKCQEEHSKHMDWH) form a C2H2-type zinc finger.

In terms of assembly, forms a complex with cleavage and polyadenylation specificity factor (CPSF) subunits CSTF77, CLPS3, PCFS4 and PCFS1.

The protein resides in the nucleus. This Arabidopsis thaliana (Mouse-ear cress) protein is Polyadenylation and cleavage factor homolog 5.